The chain runs to 160 residues: Large ribosomal subunit protein uL22c (160 aa).

Belongs to the universal ribosomal protein uL22 family. Part of the 50S ribosomal subunit.

The protein resides in the plastid. Its subcellular location is the chloroplast. Functionally, this protein binds specifically to 23S rRNA. In terms of biological role, the globular domain of the protein is located near the polypeptide exit tunnel on the outside of the subunit, while an extended beta-hairpin is found that lines the wall of the exit tunnel in the center of the 70S ribosome. The protein is Large ribosomal subunit protein uL22c (rpl22) of Aethionema grandiflorum (Persian stone-cress).